Reading from the N-terminus, the 463-residue chain is MPFEKTMDKIVALAKNRGFVYPGSDIYGGLANTWDYGPIGVELKNNVKKAWWQKFVHESQYNVGIDCAILMNNEVWVASGHVGNFSDPLMDCKECKSRFRADKLVEEHMTSKGVEKASADGWNNEKLKEYIDDNNIVCPDCGKTNFTDIRQFNLMFKTFQGVTEDSKAEIYLRPETAQGIFVNFKNVQRTSRKKIPFGIAQIGKAFRNEITPGNFTFRTREFEQMELEFFCEPGTDLEWHNYWKEYCWKFLLKLGIKEENIRFRVHEKEELSHYSNATSDIEYLFPFGWGELWGIADRTDYDLTQHQNRSGKDMTYLNPVTNERYIPYCIEPSVGADRAVLAFLVDAYDEEELEGGDVRTVMHFHPAIAPFKVAILPLSKKLSEKALDVYNMLRKDFNVDYDDAGSIGKRYRREDEIGTPYCITIDFDTMDNDTVTIRDRDTMKQFRVKIDELKDFIKEKIQF.

The substrate site is built by Arg-100 and Glu-175. Residues 207–209 (RNE), 217–222 (FRTREF), 291–292 (EL), and 335–338 (GADR) contribute to the ATP site. 222 to 226 (FEQME) contacts substrate. A substrate-binding site is contributed by 331–335 (EPSVG).

Belongs to the class-II aminoacyl-tRNA synthetase family. Homodimer.

It localises to the cytoplasm. The enzyme catalyses tRNA(Gly) + glycine + ATP = glycyl-tRNA(Gly) + AMP + diphosphate. Catalyzes the attachment of glycine to tRNA(Gly). This Clostridium kluyveri (strain NBRC 12016) protein is Glycine--tRNA ligase.